The following is a 239-amino-acid chain: Probable plastid-lipid-associated protein 8, chloroplastic (239 aa).

The N-terminal 52 residues, 1–52, are a transit peptide targeting the chloroplast; sequence MAATASSLTIASSFSEPRTQIHSSRRLNLPLQYSIPYKVLRSRSRRLGLVVS. Serine 53 bears the N-acetylserine mark.

The protein belongs to the PAP/fibrillin family.

The protein localises to the plastid. It is found in the chloroplast. In Arabidopsis thaliana (Mouse-ear cress), this protein is Probable plastid-lipid-associated protein 8, chloroplastic (PAP8).